The chain runs to 419 residues: 3-isopropylmalate dehydratase large subunit (419 aa).

Cys300, Cys360, and Cys363 together coordinate [4Fe-4S] cluster.

The protein belongs to the aconitase/IPM isomerase family. LeuC type 2 subfamily. As to quaternary structure, heterodimer of LeuC and LeuD. It depends on [4Fe-4S] cluster as a cofactor.

The enzyme catalyses (2R,3S)-3-isopropylmalate = (2S)-2-isopropylmalate. It participates in amino-acid biosynthesis; L-leucine biosynthesis; L-leucine from 3-methyl-2-oxobutanoate: step 2/4. Catalyzes the isomerization between 2-isopropylmalate and 3-isopropylmalate, via the formation of 2-isopropylmaleate. This chain is 3-isopropylmalate dehydratase large subunit, found in Acetivibrio thermocellus (strain ATCC 27405 / DSM 1237 / JCM 9322 / NBRC 103400 / NCIMB 10682 / NRRL B-4536 / VPI 7372) (Clostridium thermocellum).